A 244-amino-acid polypeptide reads, in one-letter code: Transmembrane protein 176A (244 aa).

At Ser42 the chain carries Phosphoserine. The next 4 helical transmembrane spans lie at 60 to 80 (VLVA…VLGG), 92 to 112 (SEGA…VAFL), 122 to 142 (ALMR…AIVI), and 204 to 224 (LLGI…VYIW).

Belongs to the TMEM176 family. As to quaternary structure, interacts with MCOLN2. In terms of tissue distribution, specifically expressed in lung, kidney and spleen.

Its subcellular location is the membrane. The chain is Transmembrane protein 176A (Tmem176a) from Mus musculus (Mouse).